The primary structure comprises 126 residues: Protein translocase subunit SecE (126 aa).

The next 3 helical transmembrane spans lie at 20 to 40, 42 to 62, and 97 to 117; these read WLAAFVLAAAAVVGNYLYGEM, VVVRAAGVVVLIAAALGVAAT, and IVLAVSIVMALVLWGIDGIMV.

It belongs to the SecE/SEC61-gamma family. As to quaternary structure, component of the Sec protein translocase complex. Heterotrimer consisting of SecY, SecE and SecG subunits. The heterotrimers can form oligomers, although 1 heterotrimer is thought to be able to translocate proteins. Interacts with the ribosome. Interacts with SecDF, and other proteins may be involved. Interacts with SecA.

It localises to the cell inner membrane. Functionally, essential subunit of the Sec protein translocation channel SecYEG. Clamps together the 2 halves of SecY. May contact the channel plug during translocation. The chain is Protein translocase subunit SecE from Vibrio alginolyticus.